Reading from the N-terminus, the 599-residue chain is Sulfite reductase [NADPH] flavoprotein alpha-component (599 aa).

Residues 64-202 form the Flavodoxin-like domain; it reads ITIISASQTG…AASEWRARVV (139 aa). Residues 70–75, 117–120, and 153–162 contribute to the FMN site; these read SQTGNA, STQG, and LGDSSYEFFC. Residues 234–448 form the FAD-binding FR-type domain; sequence DAPLVASLSV…IEHNDNFRLP (215 aa). FAD is bound by residues threonine 322, alanine 356, 386–389, 404–406, tyrosine 410, and 419–422; these read RLYS, TVG, and GGAS. Residues 519–520, 525–529, and aspartate 561 contribute to the NADP(+) site; these read SR and KVYVQ. Tyrosine 599 is an FAD binding site.

The protein belongs to the NADPH-dependent sulphite reductase flavoprotein subunit CysJ family. This sequence in the N-terminal section; belongs to the flavodoxin family. It in the C-terminal section; belongs to the flavoprotein pyridine nucleotide cytochrome reductase family. As to quaternary structure, alpha(8)-beta(8). The alpha component is a flavoprotein, the beta component is a hemoprotein. The cofactor is FAD. FMN is required as a cofactor.

It catalyses the reaction hydrogen sulfide + 3 NADP(+) + 3 H2O = sulfite + 3 NADPH + 4 H(+). It participates in sulfur metabolism; hydrogen sulfide biosynthesis; hydrogen sulfide from sulfite (NADPH route): step 1/1. In terms of biological role, component of the sulfite reductase complex that catalyzes the 6-electron reduction of sulfite to sulfide. This is one of several activities required for the biosynthesis of L-cysteine from sulfate. The flavoprotein component catalyzes the electron flow from NADPH -&gt; FAD -&gt; FMN to the hemoprotein component. The chain is Sulfite reductase [NADPH] flavoprotein alpha-component from Shigella dysenteriae serotype 1 (strain Sd197).